Reading from the N-terminus, the 394-residue chain is Imidazolonepropionase (394 aa).

Residues His-61 and His-63 each contribute to the Fe(3+) site. Zn(2+) is bound by residues His-61 and His-63. 3 residues coordinate 4-imidazolone-5-propanoate: Arg-70, Tyr-133, and His-164. Tyr-133 serves as a coordination point for N-formimidoyl-L-glutamate. Residue His-225 coordinates Fe(3+). His-225 contributes to the Zn(2+) binding site. Residue Glu-228 participates in 4-imidazolone-5-propanoate binding. Position 299 (Asp-299) interacts with Fe(3+). Residue Asp-299 coordinates Zn(2+).

This sequence belongs to the metallo-dependent hydrolases superfamily. HutI family. The cofactor is Zn(2+). Requires Fe(3+) as cofactor.

The protein resides in the cytoplasm. It carries out the reaction 4-imidazolone-5-propanoate + H2O = N-formimidoyl-L-glutamate. It participates in amino-acid degradation; L-histidine degradation into L-glutamate; N-formimidoyl-L-glutamate from L-histidine: step 3/3. Its function is as follows. Catalyzes the hydrolytic cleavage of the carbon-nitrogen bond in imidazolone-5-propanoate to yield N-formimidoyl-L-glutamate. It is the third step in the universal histidine degradation pathway. The chain is Imidazolonepropionase from Picrophilus torridus (strain ATCC 700027 / DSM 9790 / JCM 10055 / NBRC 100828 / KAW 2/3).